The sequence spans 445 residues: Ribosomal protein uS12 methylthiotransferase RimO (445 aa).

The MTTase N-terminal domain occupies 4-119; the sequence is YKVGMVSLGC…INEAIMNFIN (116 aa). The [4Fe-4S] cluster site is built by Cys13, Cys48, Cys82, Cys157, Cys161, and Cys164. A Radical SAM core domain is found at 143 to 373; sequence TTDKATAYLR…MLLQKEVSEE (231 aa). Residues 376 to 441 enclose the TRAM domain; the sequence is KNKVGREYDV…EYDLVGVVCN (66 aa).

The protein belongs to the methylthiotransferase family. RimO subfamily. The cofactor is [4Fe-4S] cluster.

Its subcellular location is the cytoplasm. It carries out the reaction L-aspartate(89)-[ribosomal protein uS12]-hydrogen + (sulfur carrier)-SH + AH2 + 2 S-adenosyl-L-methionine = 3-methylsulfanyl-L-aspartate(89)-[ribosomal protein uS12]-hydrogen + (sulfur carrier)-H + 5'-deoxyadenosine + L-methionine + A + S-adenosyl-L-homocysteine + 2 H(+). Functionally, catalyzes the methylthiolation of an aspartic acid residue of ribosomal protein uS12. The sequence is that of Ribosomal protein uS12 methylthiotransferase RimO from Clostridium perfringens (strain 13 / Type A).